We begin with the raw amino-acid sequence, 1229 residues long: Putative cell division cycle ATPase (1229 aa).

Over residues 252 to 267 (GKKNNNGNVKKGIKNV) the composition is skewed to low complexity. The tract at residues 252-315 (GKKNNNGNVK…GGKNNSYYNE (64 aa)) is disordered. Basic and acidic residues predominate over residues 268–281 (PMDEKSYSPNDHDN). The segment covering 282-314 (NSNNSNNNNNNDNNNSNNNNNNNNGGKNNSYYN) has biased composition (low complexity). 568–575 (GIPGTGKT) is an ATP binding site. Disordered regions lie at residues 814-837 (TLLQ…DALD) and 860-892 (FSND…KNER). 2 stretches are compositionally biased toward basic and acidic residues: residues 819 to 837 (DKNE…DALD) and 882 to 892 (NPNDKLDKNER). 975 to 982 (GPPGCGKT) is a binding site for ATP.

Belongs to the AAA ATPase family.

The sequence is that of Putative cell division cycle ATPase from Plasmodium falciparum (isolate 3D7).